The sequence spans 320 residues: TATA box-binding protein-like 2 (320 aa).

Belongs to the TBP family. Expression is restricted to the gonads, and is higher in the ovary than the testis.

The protein localises to the nucleus. TATA box-binding transcription factor. Members of the TBP family are differentially required to regulate transcription and development during early embryogenesis. Required for gastrulation. Regulates a large subset of genes that are ventrally expressed. Binds to a subset of promoters. The sequence is that of TATA box-binding protein-like 2 from Xenopus laevis (African clawed frog).